A 328-amino-acid chain; its full sequence is Beta-ketoacyl-[acyl-carrier-protein] synthase III (328 aa).

Active-site residues include Cys-122 and His-255. The ACP-binding stretch occupies residues Gln-256 to Arg-260. Asn-285 is a catalytic residue.

The protein belongs to the thiolase-like superfamily. FabH family. In terms of assembly, homodimer.

It is found in the cytoplasm. It catalyses the reaction malonyl-[ACP] + acetyl-CoA + H(+) = 3-oxobutanoyl-[ACP] + CO2 + CoA. The protein operates within lipid metabolism; fatty acid biosynthesis. In terms of biological role, catalyzes the condensation reaction of fatty acid synthesis by the addition to an acyl acceptor of two carbons from malonyl-ACP. Catalyzes the first condensation reaction which initiates fatty acid synthesis and may therefore play a role in governing the total rate of fatty acid production. Possesses both acetoacetyl-ACP synthase and acetyl transacylase activities. Its substrate specificity determines the biosynthesis of branched-chain and/or straight-chain of fatty acids. This is Beta-ketoacyl-[acyl-carrier-protein] synthase III from Bordetella pertussis (strain Tohama I / ATCC BAA-589 / NCTC 13251).